Consider the following 24-residue polypeptide: uncharacterized protein (24 aa).

The Cytoplasmic segment spans residues 1–3 (MKK). Residues 4–24 (TTIIMMGVAIIVVLGTELGWW) form a helical membrane-spanning segment.

The protein resides in the cell inner membrane. This is an uncharacterized protein from Escherichia coli (strain K12).